The sequence spans 350 residues: Calcium uniporter protein, mitochondrial (350 aa).

Residues 1–49 (MAAAAGRSLLLLLCSRGGGGGAGGCGALTAGCFPGLGVSRHRPHQQHRT) constitute a mitochondrion transit peptide. The Mitochondrial matrix segment spans residues 50–232 (AHQRPASWQS…ISRKAEKRTT (183 aa)). Ser-56 and Ser-91 each carry phosphoserine; by CaMK2. Residues 74 to 164 (VTVVYQNGLP…LTYHVRPPKR (91 aa)) form an N-terminal MCU domain region. An S-glutathionyl cysteine modification is found at Cys-96. Residues 191 to 220 (IEQHQLNKERELVERLEDLKQQLAPLEKVR) are a coiled coil. Residues 233–256 (LVLWGGLAYMATQFGILARLTWWE) traverse the membrane as a helical segment. Residues 257–264 (YSWDIMEP) are Mitochondrial intermembrane-facing. The short motif at 259–267 (WDIMEPVTY) is the Selectivity filter element. Glu-263 contributes to the Ca(2+) binding site. A helical transmembrane segment spans residues 265-282 (VTYFITYGSAMAMYAYFV). Residues 283-350 (MTRQEYVYPE…LPLRQIGEKE (68 aa)) lie on the Mitochondrial matrix side of the membrane. The juxtamembrane helix stretch occupies residues 284 to 289 (TRQEYV). The stretch at 310 to 338 (RFDLEKYNQLKDAIAQAEMDLKRLRDPLQ) forms a coiled coil. Lys-331 carries the post-translational modification N6-acetyllysine.

This sequence belongs to the MCU (TC 1.A.77) family. In terms of assembly, homotetramer. Component of the uniplex complex, composed of MCU, EMRE/SMDT1, MICU1 and MICU2 (or MICU3) in a 4:4:1:1 stoichiometry. Interacts with CCDC109B/MCUB; this inhibits channel activity. Interacts with MCUR1. Interactions with MICU1 and MCUR1 are mutually exclusive. Interacts with SLC25A23. In terms of processing, phosphorylation by CaMK2 in heart leads to increased MCU current. The regulation of MCU by CaMK2 is however subject to discussion: another group was unable to reproduce these results. Phosphorylated on tyrosines by PTK2B/PYK2, promoting oligomerization. Glutathionylation at Cys-96 in response to reactive oxygen species (ROS) promotes MCU higher-order assembly, leading to constitutive activation of the MCU channel and mitochondrial calcium overload. Post-translationally, undergoes proteolytic degradation by SPG7. Detected in heart muscle (at protein level). Expressed in skeletal muscle, heart, kidney, liver, brain, lung, white fat and spleen.

The protein localises to the mitochondrion inner membrane. The catalysed reaction is Ca(2+)(in) = Ca(2+)(out). With respect to regulation, MCU channel activity is regulated by the heterodimer composed of MICU1 and either MICU2 or MICU3, which act as calcium-sensors. At low calcium levels, MICU1 occludes the pore of the MCU channel, preventing mitochondrial calcium uptake. At higher calcium levels, calcium-binding to MICU1 and MICU2 (or MICU3) induces a conformational change that weakens MCU-MICU1 interactions and moves the MICU1-MICU2 heterodimer away from the pore, allowing calcium permeation through the channel. MCU channel activity is gated by EMRE/SMDT1 via the juxtamembrane helix loop. Inhibited by ruthenium red or its derivative Ru360. In terms of biological role, channel-forming and calcium-conducting subunit of the mitochondrial inner membrane calcium uniporter complex (uniplex), which mediates calcium uptake into the mitochondrial matrix. MCU channel activity is regulated by the calcium-sensor subunits of the uniplex MICU1 and MICU2 (or MICU3). Mitochondrial calcium homeostasis plays key roles in cellular physiology and regulates ATP production, cytoplasmic calcium signals and activation of cell death pathways. Involved in buffering the amplitude of systolic calcium rises in cardiomyocytes. While dispensable for baseline homeostatic cardiac function, acts as a key regulator of short-term mitochondrial calcium loading underlying a 'fight-or-flight' response during acute stress: acts by mediating a rapid increase of mitochondrial calcium in pacemaker cells. Participates in mitochondrial permeability transition during ischemia-reperfusion injury. Mitochondrial calcium uptake in skeletal muscle cells is involved in muscle size in adults. Regulates synaptic vesicle endocytosis kinetics in central nerve terminal. Regulates glucose-dependent insulin secretion in pancreatic beta-cells by regulating mitochondrial calcium uptake. Involved in antigen processing and presentation. The sequence is that of Calcium uniporter protein, mitochondrial from Mus musculus (Mouse).